Here is a 617-residue protein sequence, read N- to C-terminus: mRNA export factor MEX67 (617 aa).

Residues 1–10 (MSYRGRGGGY) show a composition bias toward gly residues. Residues 1-24 (MSYRGRGGGYNNNRGQFSSGPHQH) are disordered. LRR repeat units follow at residues 185-206 (DVDS…TSMA), 211-232 (KLQN…ETWR), and 237-258 (FLRE…AEIQ). In terms of domain architecture, NTF2 spans 309–499 (LATNFIANYL…MIVASDTLLI (191 aa)). Disordered stretches follow at residues 442–469 (EVDG…HKRI) and 513–554 (LPSN…TTAD). Composition is skewed to low complexity over residues 445–459 (GSAS…GGSR) and 526–542 (ATST…TTPQ). One can recognise a TAP-C domain in the interval 565-617 (QIQQELLVKILLETKLNINYGIMLCEQSNWDYQQASVNFKNSAASLPSDAFVQ).

The protein belongs to the NXF family. In terms of assembly, interacts with nucleoporin complex protein MTR2.

The protein resides in the nucleus. It localises to the cytoplasm. Functionally, involved in the export of mRNA from the nucleus to the cytoplasm. This Candida albicans (strain SC5314 / ATCC MYA-2876) (Yeast) protein is mRNA export factor MEX67.